The chain runs to 103 residues: Ribonuclease VapC14 (103 aa).

The 72-residue stretch at 3–74 (YVLDTNVVSA…WFDDKVLRIF (72 aa)) folds into the PINc domain. Residue D6 coordinates Mg(2+).

This sequence belongs to the PINc/VapC protein family. The cofactor is Mg(2+).

Toxic component of a type II toxin-antitoxin (TA) system. An RNase. The cognate antitoxin is VapB14. In Mycobacterium tuberculosis (strain CDC 1551 / Oshkosh), this protein is Ribonuclease VapC14 (vapC14).